The chain runs to 91 residues: Elongation factor 1-beta (91 aa).

This sequence belongs to the EF-1-beta/EF-1-delta family.

Its function is as follows. Promotes the exchange of GDP for GTP in EF-1-alpha/GDP, thus allowing the regeneration of EF-1-alpha/GTP that could then be used to form the ternary complex EF-1-alpha/GTP/AAtRNA. The polypeptide is Elongation factor 1-beta (Metallosphaera sedula (strain ATCC 51363 / DSM 5348 / JCM 9185 / NBRC 15509 / TH2)).